A 405-amino-acid polypeptide reads, in one-letter code: K(+)/H(+) antiporter subunit KhtU (405 aa).

The next 12 helical transmembrane spans lie at 3-23 (HLVF…VIAN), 29-49 (IIPF…KMGI), 60-80 (IIEF…GLEF), 85-105 (LIKS…INFS), 108-128 (LLYG…AGVI), 153-173 (LILG…SVVS), 183-203 (VGSA…FFIA), 222-242 (VFII…ETIH), 268-288 (LVVP…GLSI), 297-317 (VWLA…AGMV), 332-352 (IGLT…LGIA), and 357-377 (ATLK…GPLV).

Belongs to the monovalent cation:proton antiporter 2 (CPA2) transporter (TC 2.A.37) family. As to quaternary structure, the transporter is composed of the integral membrane protein KhtU and the regulatory protein KhtT.

The protein localises to the cell membrane. With respect to regulation, potassium antiport activity requires the presence of KhtT. Activity is also modulated by KhtS. Has higher activity at alkaline pH. In terms of biological role, potassium/proton antiporter that mediates the efflux of potassium ions from the cell. Can also mediate rubidium/proton antiport, but has no permeability for sodium or lithium ions. In the absence of KhtT, does not have antiport activity, but can catalyze potassium efflux. Involved in protection of the cell from methylglyoxal, a toxic by-product of glycolysis, via activation by S-lactoyl-BSH of the antiporter activity, leading to cytoplasmic acidification and methylglyoxal resistance. The sequence is that of K(+)/H(+) antiporter subunit KhtU from Bacillus subtilis (strain 168).